The following is a 259-amino-acid chain: tRNA-cytidine(32) 2-sulfurtransferase (259 aa).

Residues Ser37–Ser42 carry the PP-loop motif motif. 3 residues coordinate [4Fe-4S] cluster: Cys112, Cys115, and Cys202.

This sequence belongs to the TtcA family. Homodimer. Requires Mg(2+) as cofactor. [4Fe-4S] cluster serves as cofactor.

The protein resides in the cytoplasm. The catalysed reaction is cytidine(32) in tRNA + S-sulfanyl-L-cysteinyl-[cysteine desulfurase] + AH2 + ATP = 2-thiocytidine(32) in tRNA + L-cysteinyl-[cysteine desulfurase] + A + AMP + diphosphate + H(+). The protein operates within tRNA modification. Its function is as follows. Catalyzes the ATP-dependent 2-thiolation of cytidine in position 32 of tRNA, to form 2-thiocytidine (s(2)C32). The sulfur atoms are provided by the cysteine/cysteine desulfurase (IscS) system. In Syntrophotalea carbinolica (strain DSM 2380 / NBRC 103641 / GraBd1) (Pelobacter carbinolicus), this protein is tRNA-cytidine(32) 2-sulfurtransferase.